Reading from the N-terminus, the 370-residue chain is 3-isopropylmalate dehydrogenase (370 aa).

An NAD(+)-binding site is contributed by 77 to 90 (GPKWDSVPYEVRPE). Substrate is bound by residues Arg-97, Arg-107, Arg-135, and Asp-226. Mg(2+)-binding residues include Asp-226, Asp-250, and Asp-254. An NAD(+)-binding site is contributed by 290-302 (GSAPDIAGKGIAN).

This sequence belongs to the isocitrate and isopropylmalate dehydrogenases family. LeuB type 1 subfamily. Homodimer. It depends on Mg(2+) as a cofactor. Mn(2+) is required as a cofactor.

Its subcellular location is the cytoplasm. It catalyses the reaction (2R,3S)-3-isopropylmalate + NAD(+) = 4-methyl-2-oxopentanoate + CO2 + NADH. It participates in amino-acid biosynthesis; L-leucine biosynthesis; L-leucine from 3-methyl-2-oxobutanoate: step 3/4. Its function is as follows. Catalyzes the oxidation of 3-carboxy-2-hydroxy-4-methylpentanoate (3-isopropylmalate) to 3-carboxy-4-methyl-2-oxopentanoate. The product decarboxylates to 4-methyl-2 oxopentanoate. In Brucella abortus (strain 2308), this protein is 3-isopropylmalate dehydrogenase.